The sequence spans 729 residues: uncharacterized protein (729 aa).

This is an uncharacterized protein from Caenorhabditis elegans.